A 547-amino-acid chain; its full sequence is MDIKNDIRNISNLLDDDILCDVIITIGDGEEIKAHKTILAAGSTYFKTMFTTPMIARDLVTRVNLQMFDKDVVKNIVQYLYNRHISSMNVIDVLKCADYLLINDLVTNCESYIKDYINHDIYHKLYEMVHIPIVKYIKRMLISNIPTLITTNAFKKTVFEILFDIISTNDSVYLYREGYKVTILLKWLEYNYITEEQLLCILSCIDIQNLDKKSRLLLYSNKTINMHPSCIQFLLDNKQNRNIIPHQLCLACHDTNYNVCNPCIVVYNINTMEYSVISTIPNHIINYASAIVDNDIIIARGYNFNNPSLNKVYKINIENKIHVELPPIIKNRCRFSLAVIDDTIYAIGGQNGTNVERTIECYTMGDDKWKMLPNMPIALSSYGMCVLDQYIYIIGGRTQHIDYTSVHTVNSIDMEEDTNISNKVMRYDTVNNIWETLPNFWTGTINPGVVSHKDDIYVVCDIKDEKNVKTCIFRYNTNTYNGWELVTTTESRLSALHTILYNNTIMMLHCYESYMLQDTFNVYTREWNHMCHQHSNSYIMYNILPIY.

Residues 20–89 enclose the BTB domain; sequence CDVIITIGDG…LYNRHISSMN (70 aa). 3 Kelch repeats span residues 295 to 342, 343 to 389, and 391 to 454; these read DIII…VIDD, TIYA…VLDQ, and IYII…SHKD.

As to quaternary structure, interacts (via BTB domain) with host CUL3.

It localises to the host cytoplasm. In terms of biological role, probable substrate-specific adapter of CUL3-containing E3 ubiquitin-protein ligases which mediate the ubiquitination and subsequent proteasomal degradation of host target proteins. The protein is Kelch repeat and BTB domain-containing protein 2 (KBTB2) of Bos taurus (Bovine).